A 209-amino-acid polypeptide reads, in one-letter code: Neurotrophin-4 (209 aa).

Residues 1-21 (MLPRHSCSLLLFLFLLPSVPM) form the signal peptide. Residues 22-79 (EPHPPSSTLPPFLAPEWDLLSPRVALSRGAPAGPPLLFLLEAGAYGEPAGAPANRSRR) constitute a propeptide that is removed on maturation. N-linked (GlcNAc...) asparagine glycosylation occurs at asparagine 75. Intrachain disulfides connect cysteine 96-cysteine 169, cysteine 140-cysteine 198, and cysteine 157-cysteine 200.

Belongs to the NGF-beta family.

Its subcellular location is the secreted. Functionally, target-derived survival factor for peripheral sensory sympathetic neurons. May promote ameloblast differentiation and subsequent reduction in proliferation of ameloblasts. In Mus musculus (Mouse), this protein is Neurotrophin-4 (Ntf4).